The sequence spans 594 residues: Elongation factor 4 (594 aa).

Positions 2 to 184 (KNIRNFSIIA…TIVAKVPAPE (183 aa)) constitute a tr-type G domain. GTP is bound by residues 14-19 (DHGKST) and 131-134 (NKID).

Belongs to the TRAFAC class translation factor GTPase superfamily. Classic translation factor GTPase family. LepA subfamily.

The protein resides in the cell inner membrane. The enzyme catalyses GTP + H2O = GDP + phosphate + H(+). In terms of biological role, required for accurate and efficient protein synthesis under certain stress conditions. May act as a fidelity factor of the translation reaction, by catalyzing a one-codon backward translocation of tRNAs on improperly translocated ribosomes. Back-translocation proceeds from a post-translocation (POST) complex to a pre-translocation (PRE) complex, thus giving elongation factor G a second chance to translocate the tRNAs correctly. Binds to ribosomes in a GTP-dependent manner. The protein is Elongation factor 4 of Francisella tularensis subsp. holarctica (strain FTNF002-00 / FTA).